A 319-amino-acid chain; its full sequence is Aspartate carbamoyltransferase catalytic subunit (319 aa).

The carbamoyl phosphate site is built by Arg-57 and Thr-58. Lys-85 contacts L-aspartate. Carbamoyl phosphate is bound by residues Arg-107, His-140, and Gln-143. L-aspartate contacts are provided by Arg-173 and Arg-227. Gly-268 and Pro-269 together coordinate carbamoyl phosphate.

The protein belongs to the aspartate/ornithine carbamoyltransferase superfamily. ATCase family. In terms of assembly, heterododecamer (2C3:3R2) of six catalytic PyrB chains organized as two trimers (C3), and six regulatory PyrI chains organized as three dimers (R2).

The enzyme catalyses carbamoyl phosphate + L-aspartate = N-carbamoyl-L-aspartate + phosphate + H(+). It participates in pyrimidine metabolism; UMP biosynthesis via de novo pathway; (S)-dihydroorotate from bicarbonate: step 2/3. In terms of biological role, catalyzes the condensation of carbamoyl phosphate and aspartate to form carbamoyl aspartate and inorganic phosphate, the committed step in the de novo pyrimidine nucleotide biosynthesis pathway. This is Aspartate carbamoyltransferase catalytic subunit from Mycobacterium tuberculosis (strain ATCC 25177 / H37Ra).